Consider the following 1014-residue polypeptide: Collagen alpha-1(I) chain (1014 aa).

The disordered stretch occupies residues 1–1014 (SYGYDEKGGI…PGPPGPPGPP (1014 aa)). Residues 9-22 (GISVPGPMGPSGPR) are compositionally biased toward low complexity. 11 positions are modified to 4-hydroxyproline: Pro25, Pro28, Pro30, Pro39, Pro42, Pro45, Pro60, Pro75, Pro81, Pro90, and Pro96. The segment covering 33-51 (QGFQGPPGEPGEPGSSGPM) has biased composition (low complexity). Residues 63–77 (NGDDGEAGKPGRPGE) are compositionally biased toward basic and acidic residues. Lys99 is subject to 5-hydroxylysine; alternate. A glycan (O-linked (Gal...) hydroxylysine; alternate) is linked at Lys99. Ser105 carries the phosphoserine modification. The segment covering 113–129 (DAGPAGPKGEPGSPGEN) has biased composition (low complexity). A 4-hydroxyproline mark is found at Pro123, Pro126, Pro132, Pro141, Pro147, Pro168, Pro177, Pro180, Pro207, Pro210, Pro222, Pro228, Pro237, Pro243, Pro246, and Pro261. Low complexity predominate over residues 147 to 165 (PGASGPAGARGNDGATGAA). The span at 167-179 (PPGPTGPAGPPGF) shows a compositional bias: pro residues. Residues 213–252 (AGAAGPAGNPGADGQPGAKGANGAPGIAGAPGFPGARGPS) show a composition bias toward low complexity. A 5-hydroxylysine modification is found at Lys264. 4-hydroxyproline occurs at positions 270, 273, 285, 294, 309, 315, 324, and 330. Positions 319–328 (GERGGPGSRG) are enriched in gly residues. Lys339 carries the 5-hydroxylysine modification. A 4-hydroxyproline mark is found at Pro348, Pro357, Pro363, Pro369, Pro378, Pro381, Pro390, Pro399, Pro405, Pro417, Pro426, Pro435, Pro438, Pro456, Pro473, Pro479, Pro485, Pro491, Pro497, Pro503, Pro515, Pro524, Pro535, Pro548, Pro554, and Pro563. Low complexity predominate over residues 372–398 (KGLTGSPGSPGPDGKTGPPGPAGQDGR). The span at 407–426 (ARGQAGVMGFPGPKGAAGEP) shows a compositional bias: low complexity. Over residues 485–494 (PGEAGKPGEQ) the composition is skewed to low complexity. 5-hydroxylysine is present on Lys575. Residues Pro581, Pro596, and Pro602 each carry the 4-hydroxyproline modification. Positions 608–622 (SGPSGPAGPTGARGA) are enriched in low complexity. A Phosphoserine modification is found at Ser611. Pro623, Pro629, Pro632, Pro641, Pro647, Pro674, and Pro683 each carry 4-hydroxyproline. Residues 635 to 665 (AGFAGPPGADGQPGAKGEPGDAGAKGDAGPS) show a composition bias toward low complexity. The residue at position 686 (Lys686) is a 5-hydroxylysine. Low complexity predominate over residues 691–707 (SAGPPGATGFPGAAGRV). 2 positions are modified to 4-hydroxyproline: Pro695 and Pro701. At Pro709 the chain carries 3-hydroxyproline. A 4-hydroxyproline mark is found at Pro710, Pro719, Pro722, Pro743, Pro752, Pro760, Pro769, Pro787, Pro796, Pro799, Pro805, Pro820, Pro826, Pro832, Pro841, and Pro847. Residues 736–745 (ETGPAGRPGE) show a composition bias toward low complexity. Low complexity predominate over residues 757–769 (KGSPGADGPAGAP). Residues 819–829 (PPGPVGPPGLA) are compositionally biased toward pro residues. Lys856 carries the 5-hydroxylysine modification. The span at 864-879 (PGPPGAPGAPGAPGPV) shows a compositional bias: pro residues. Pro867, Pro870, and Pro873 each carry 4-hydroxyproline. Low complexity predominate over residues 900-914 (AGPAGARGPAGPQGP). Basic and acidic residues predominate over residues 915–929 (RGDKGETGEQGDRGI). Lys918 carries the 5-hydroxylysine modification. At Lys930 the chain carries 5-hydroxylysine; alternate. Residue Lys930 is glycosylated (O-linked (Gal...) hydroxylysine; alternate). A 4-hydroxyproline mark is found at Pro945, Pro948, Pro966, and Pro981. The segment covering 948-981 (PGEQGPSGASGPAGPRGPPGSAGSPGKDGLNGLP) has biased composition (low complexity). Pro986 is modified (3-hydroxyproline). Pro987 bears the 4-hydroxyproline mark. Residues 999-1014 (VGPPGPPGPPGPPGPP) show a composition bias toward pro residues. Pro1001 carries the post-translational modification 3-hydroxyproline. A 4-hydroxyproline modification is found at Pro1002. Position 1004 is a 3-hydroxyproline (Pro1004). Pro1005 is modified (4-hydroxyproline). Pro1007 is modified (3-hydroxyproline). 4-hydroxyproline is present on residues Pro1008, Pro1011, and Pro1014.

Belongs to the fibrillar collagen family. As to quaternary structure, trimers of one alpha 2(I) and two alpha 1(I) chains. Contains mostly 4-hydroxyproline. Proline residues at the third position of the tripeptide repeating unit (G-X-Y) are hydroxylated in some or all of the chains. In terms of processing, contains 3-hydroxyproline at a few sites. This modification occurs on the first proline residue in the sequence motif Gly-Pro-Hyp, where Hyp is 4-hydroxyproline. Post-translationally, lysine residues at the third position of the tripeptide repeating unit (G-X-Y) are 5-hydroxylated in some or all of the chains. O-glycosylated on hydroxylated lysine residues. The O-linked glycan consists of a Glc-Gal disaccharide. In terms of tissue distribution, expressed in bones.

It is found in the secreted. It localises to the extracellular space. Its subcellular location is the extracellular matrix. Its function is as follows. Type I collagen is a member of group I collagen (fibrillar forming collagen). The sequence is that of Collagen alpha-1(I) chain from Megatherium americanum (Giant ground sloth).